Here is a 605-residue protein sequence, read N- to C-terminus: Pescadillo homolog (605 aa).

Residues 51–484 form a sufficient for interaction with ERB1 region; that stretch reads KANKGSTAPT…GEEEESESES (434 aa). Ser-288 is modified (phosphoserine). Residues 294–342 are a coiled coil; that stretch reads LKSALNADEANTDETEKEEEQEKKQEKEQEKEQNEETELDTFEDNNKNK. Residues 297–342 form a disordered region; it reads ALNADEANTDETEKEEEQEKKQEKEQEKEQNEETELDTFEDNNKNK. A compositionally biased stretch (acidic residues) spans 303–312; the sequence is ANTDETEKEE. Residue Thr-308 is modified to Phosphothreonine. Positions 313 to 327 are enriched in basic and acidic residues; the sequence is EQEKKQEKEQEKEQN. In terms of domain architecture, BRCT spans 355–449; that stretch reads PVASLFSAFV…ELVPANKYLP (95 aa). Residues 459-605 form a disordered region; the sequence is PWGDAIGYDP…AKLNKLDSKK (147 aa). Over residues 473-510 the composition is skewed to acidic residues; that stretch reads EEGEEEESESESESEDQVEEEDQEVVAGEEDDDDDEEL. Positions 530 to 605 form a coiled coil; sequence EADKDVNKSK…AKLNKLDSKK (76 aa). Basic residues predominate over residues 562–571; it reads KQKKLYKKMK. A compositionally biased stretch (basic and acidic residues) spans 575 to 584; it reads AKKEEQAENL. A compositionally biased stretch (basic residues) spans 585–598; sequence KKKKKQIAKQKAKL.

The protein belongs to the pescadillo family. In terms of assembly, component of the NOP7 complex, composed of ERB1, NOP7 and YTM1. The complex is held together by ERB1, which interacts with NOP7 via its N-terminal domain and with YTM1 via a high-affinity interaction between the seven-bladed beta-propeller domains of the 2 proteins. The NOP7 complex associates with the 66S pre-ribosome.

It is found in the nucleus. Its subcellular location is the nucleolus. It localises to the nucleoplasm. Its function is as follows. Component of the NOP7 complex, which is required for maturation of the 25S and 5.8S ribosomal RNAs and formation of the 60S ribosome. This is Pescadillo homolog from Saccharomyces cerevisiae (strain YJM789) (Baker's yeast).